The sequence spans 299 residues: NAD kinase (299 aa).

Catalysis depends on Asp71, which acts as the Proton acceptor. Residues 71–72, 145–146, Arg173, Asp175, 186–191, Ala210, and Gln248 each bind NAD(+); these read DG, ND, and TAYSLS.

The protein belongs to the NAD kinase family. A divalent metal cation is required as a cofactor.

It is found in the cytoplasm. The enzyme catalyses NAD(+) + ATP = ADP + NADP(+) + H(+). Functionally, involved in the regulation of the intracellular balance of NAD and NADP, and is a key enzyme in the biosynthesis of NADP. Catalyzes specifically the phosphorylation on 2'-hydroxyl of the adenosine moiety of NAD to yield NADP. This Bordetella pertussis (strain Tohama I / ATCC BAA-589 / NCTC 13251) protein is NAD kinase.